A 416-amino-acid chain; its full sequence is Lipid II:glycine glycyltransferase (416 aa).

Belongs to the FemABX family.

It localises to the cytoplasm. It catalyses the reaction beta-D-GlcNAc-(1-&gt;4)-Mur2Ac(oyl-L-Ala-D-isoglutaminyl-L-Lys-D-Ala-D-Ala)-di-trans,octa-cis-undecaprenyl diphosphate + glycyl-tRNA(Gly) = beta-D-GlcNAc-(1-&gt;4)-Mur2Ac(oyl-L-Ala-D-isoglutaminyl-L-Lys-(N(6)-Gly)-D-Ala-D-Ala)-di-trans,octa-cis-undecaprenyl diphosphate + tRNA(Gly) + H(+). Functionally, catalyzes the incorporation of amino acid(s) into the interchain peptide bridge of peptidoglycan, using aminoacyl-tRNA as amino acid donor. The polypeptide is Lipid II:glycine glycyltransferase (femX) (Staphylococcus epidermidis (strain ATCC 35984 / DSM 28319 / BCRC 17069 / CCUG 31568 / BM 3577 / RP62A)).